Consider the following 113-residue polypeptide: Hydrogenase maturation factor HypA (113 aa).

A Ni(2+)-binding site is contributed by His2. Zn(2+) contacts are provided by Cys73, Cys76, Cys89, and Cys92.

It belongs to the HypA/HybF family.

Functionally, involved in the maturation of [NiFe] hydrogenases. Required for nickel insertion into the metal center of the hydrogenase. This chain is Hydrogenase maturation factor HypA, found in Actinobacillus succinogenes (strain ATCC 55618 / DSM 22257 / CCUG 43843 / 130Z).